A 345-amino-acid polypeptide reads, in one-letter code: Probable dual-specificity RNA methyltransferase RlmN (345 aa).

The active-site Proton acceptor is Glu98. Positions 104–332 (TYKRLTVCVS…VSIRYSRGLE (229 aa)) constitute a Radical SAM core domain. Cys111 and Cys337 are joined by a disulfide. 3 residues coordinate [4Fe-4S] cluster: Cys118, Cys122, and Cys125. Residues 165 to 166 (GE), Ser195, 218 to 220 (SLH), and Asn294 contribute to the S-adenosyl-L-methionine site. Residue Cys337 is the S-methylcysteine intermediate of the active site.

This sequence belongs to the radical SAM superfamily. RlmN family. [4Fe-4S] cluster serves as cofactor.

It localises to the cytoplasm. The enzyme catalyses adenosine(2503) in 23S rRNA + 2 reduced [2Fe-2S]-[ferredoxin] + 2 S-adenosyl-L-methionine = 2-methyladenosine(2503) in 23S rRNA + 5'-deoxyadenosine + L-methionine + 2 oxidized [2Fe-2S]-[ferredoxin] + S-adenosyl-L-homocysteine. It carries out the reaction adenosine(37) in tRNA + 2 reduced [2Fe-2S]-[ferredoxin] + 2 S-adenosyl-L-methionine = 2-methyladenosine(37) in tRNA + 5'-deoxyadenosine + L-methionine + 2 oxidized [2Fe-2S]-[ferredoxin] + S-adenosyl-L-homocysteine. Functionally, specifically methylates position 2 of adenine 2503 in 23S rRNA and position 2 of adenine 37 in tRNAs. This chain is Probable dual-specificity RNA methyltransferase RlmN, found in Trichodesmium erythraeum (strain IMS101).